The primary structure comprises 263 residues: Acyl-[acyl-carrier-protein]--UDP-N-acetylglucosamine O-acyltransferase (263 aa).

Belongs to the transferase hexapeptide repeat family. LpxA subfamily. As to quaternary structure, homotrimer.

It is found in the cytoplasm. The catalysed reaction is a (3R)-hydroxyacyl-[ACP] + UDP-N-acetyl-alpha-D-glucosamine = a UDP-3-O-[(3R)-3-hydroxyacyl]-N-acetyl-alpha-D-glucosamine + holo-[ACP]. Its pathway is glycolipid biosynthesis; lipid IV(A) biosynthesis; lipid IV(A) from (3R)-3-hydroxytetradecanoyl-[acyl-carrier-protein] and UDP-N-acetyl-alpha-D-glucosamine: step 1/6. Involved in the biosynthesis of lipid A, a phosphorylated glycolipid that anchors the lipopolysaccharide to the outer membrane of the cell. The sequence is that of Acyl-[acyl-carrier-protein]--UDP-N-acetylglucosamine O-acyltransferase from Xanthomonas axonopodis pv. citri (strain 306).